The chain runs to 1379 residues: DNA-directed RNA polymerase subunit beta (1379 aa).

Belongs to the RNA polymerase beta chain family. The RNAP catalytic core consists of 2 alpha, 1 beta, 1 beta' and 1 omega subunit. When a sigma factor is associated with the core the holoenzyme is formed, which can initiate transcription.

The enzyme catalyses RNA(n) + a ribonucleoside 5'-triphosphate = RNA(n+1) + diphosphate. In terms of biological role, DNA-dependent RNA polymerase catalyzes the transcription of DNA into RNA using the four ribonucleoside triphosphates as substrates. This chain is DNA-directed RNA polymerase subunit beta, found in Rhizobium johnstonii (strain DSM 114642 / LMG 32736 / 3841) (Rhizobium leguminosarum bv. viciae).